We begin with the raw amino-acid sequence, 308 residues long: D-alanine--D-alanine ligase (308 aa).

Positions 100–295 constitute an ATP-grasp domain; the sequence is KEVFVRNGLP…FDGLIGRLIE (196 aa). Position 127–180 (127–180) interacts with ATP; that stretch reads PFAFPAFIKSNNGGSSLALHRVSCPGELARALDELFTRGGEAIIEPAVEGVEVT. Mg(2+)-binding residues include Asp-249, Glu-262, and Asn-264.

Belongs to the D-alanine--D-alanine ligase family. It depends on Mg(2+) as a cofactor. The cofactor is Mn(2+).

Its subcellular location is the cytoplasm. The enzyme catalyses 2 D-alanine + ATP = D-alanyl-D-alanine + ADP + phosphate + H(+). The protein operates within cell wall biogenesis; peptidoglycan biosynthesis. Functionally, cell wall formation. In Oleidesulfovibrio alaskensis (strain ATCC BAA-1058 / DSM 17464 / G20) (Desulfovibrio alaskensis), this protein is D-alanine--D-alanine ligase.